Consider the following 257-residue polypeptide: Ribonuclease PH (257 aa).

Phosphate is bound by residues Arg-87 and 125-127 (GTR).

Belongs to the RNase PH family. In terms of assembly, homohexameric ring arranged as a trimer of dimers.

It catalyses the reaction tRNA(n+1) + phosphate = tRNA(n) + a ribonucleoside 5'-diphosphate. Its function is as follows. Phosphorolytic 3'-5' exoribonuclease that plays an important role in tRNA 3'-end maturation. Removes nucleotide residues following the 3'-CCA terminus of tRNAs; can also add nucleotides to the ends of RNA molecules by using nucleoside diphosphates as substrates, but this may not be physiologically important. Probably plays a role in initiation of 16S rRNA degradation (leading to ribosome degradation) during starvation. The sequence is that of Ribonuclease PH from Geobacillus kaustophilus (strain HTA426).